Reading from the N-terminus, the 339-residue chain is MKNNKSVIIWLLSGCFLVFIMVVVGGITRLTNSGLSMTDWHLVTDTFPPLTEAKWEETFEKYKLFPEYQKINIHNDFTLSDYKFIYFWEWFHRFIGRIIGLVFIIPFIYFLIKKKLNTETLRKCAILLGMGAFQGFLGWFMVKSGLIDAPDVSHFRLSLHLTFAFITFAYTLWVALDLIYPEKKQVILPLRNIARITLAIIILQIIYGGFVAGLNAGLIHNHWPLMSDGQFFHESIILEKESWFARFTEGKSGVQFVHRTIAYFVAGLIVFLTFKSKKHTLSLEQKNGLNALLIIVFIQFTLGVLTLLYSVPLWLGVIHQAMAFILLATTTYTLHRFSK.

The next 8 membrane-spanning stretches (helical) occupy residues 7 to 27 (VIIW…VGGI), 92 to 112 (HRFI…YFLI), 126 to 146 (ILLG…KSGL), 159 to 179 (LHLT…LDLI), 199 to 219 (AIII…AGLI), 254 to 274 (VQFV…FLTF), 291 to 311 (ALLI…LYSV), and 312 to 332 (PLWL…TTTY). H258 serves as a coordination point for heme. Residue H319 participates in heme binding.

It belongs to the COX15/CtaA family. Type 2 subfamily. As to quaternary structure, interacts with CtaB. The cofactor is heme b.

The protein resides in the cell membrane. It catalyses the reaction Fe(II)-heme o + 2 A + H2O = Fe(II)-heme a + 2 AH2. Its pathway is porphyrin-containing compound metabolism; heme A biosynthesis; heme A from heme O: step 1/1. Catalyzes the conversion of heme O to heme A by two successive hydroxylations of the methyl group at C8. The first hydroxylation forms heme I, the second hydroxylation results in an unstable dihydroxymethyl group, which spontaneously dehydrates, resulting in the formyl group of heme A. This Flavobacterium psychrophilum (strain ATCC 49511 / DSM 21280 / CIP 103535 / JIP02/86) protein is Heme A synthase.